We begin with the raw amino-acid sequence, 560 residues long: Dimethylaniline monooxygenase [N-oxide-forming] 4 (560 aa).

Residues 9–13, Glu-32, and 40–41 each bind FAD; these read GAGVS and LW. NADP(+) is bound by residues 60–61 and 195–198; these read TN and TGGD. The helical transmembrane segment at 519–539 threads the bilayer; it reads APVLIVSLLLIYKSSLFLELV.

The protein belongs to the FMO family. Requires FAD as cofactor. Detected in liver and kidney (at protein level).

The protein localises to the microsome membrane. It is found in the endoplasmic reticulum membrane. It catalyses the reaction N,N-dimethylaniline + NADPH + O2 + H(+) = N,N-dimethylaniline N-oxide + NADP(+) + H2O. This protein is involved in the oxidative metabolism of a variety of xenobiotics such as drugs and pesticides. The sequence is that of Dimethylaniline monooxygenase [N-oxide-forming] 4 (Fmo4) from Rattus norvegicus (Rat).